Consider the following 459-residue polypeptide: Elongation factor 1-alpha (459 aa).

Gly2 bears the N,N,N-trimethylglycine mark. Residue Lys3 is modified to N6,N6-dimethyllysine; alternate. Residue Lys3 is modified to N6-methyllysine; alternate. Residues Lys5 to Ser240 form the tr-type G domain. A G1 region spans residues Gly14–Ser21. Gly14–Ser21 is a binding site for GTP. Lys30 carries the N6-methyllysine modification. The tract at residues Val70 to Asp74 is G2. An N6,N6,N6-trimethyllysine modification is found at Lys79. The interval Asp91 to Gly94 is G3. GTP-binding positions include Asp91 to His95 and Asn153 to Asp156. The segment at Asn153–Asp156 is G4. Residues Ser192 to Trp194 form a G5 region. Lys316 is modified (N6,N6-dimethyllysine; alternate). Lys316 is modified (N6-methyllysine; alternate). Lys390 is subject to N6-methyllysine.

It belongs to the TRAFAC class translation factor GTPase superfamily. Classic translation factor GTPase family. EF-Tu/EF-1A subfamily.

Its subcellular location is the cytoplasm. This protein promotes the GTP-dependent binding of aminoacyl-tRNA to the A-site of ribosomes during protein biosynthesis. The protein is Elongation factor 1-alpha (TEF) of Blastobotrys adeninivorans (Yeast).